Reading from the N-terminus, the 643-residue chain is Maternal embryonic leucine zipper kinase (643 aa).

The region spanning 11–263 (YELYETIGTG…MRNLLNHPWV (253 aa)) is the Protein kinase domain. Residues 17–25 (IGTGGFAKV) and Lys-40 each bind ATP. Thr-56 is subject to Phosphothreonine; by autocatalysis. Asp-132 acts as the Proton acceptor in catalysis. Tyr-163 carries the post-translational modification Phosphotyrosine; by autocatalysis. Thr-167 is subject to Phosphothreonine; by autocatalysis. 2 positions are modified to phosphoserine; by autocatalysis: Ser-171 and Ser-253. A UBA-like region spans residues 282–321 (LDEDCVTELSVHHRSSRQTMEDLISSWQYDHLTATYLLLL). Residues 326–643 (RGKPARLQLL…VEDILSGCKM (318 aa)) form an autoinhibitory region region. Phosphoserine; by autocatalysis is present on residues Ser-336 and Ser-343. A Phosphoserine modification is found at Ser-352. Ser-399 and Ser-423 each carry phosphoserine; by autocatalysis. Thr-486 is subject to Phosphothreonine; by autocatalysis. Phosphoserine is present on Ser-490. Position 497 is a phosphoserine; by autocatalysis (Ser-497). A Phosphothreonine modification is found at Thr-510. A Phosphoserine; by autocatalysis modification is found at Ser-521. At Thr-531 the chain carries Phosphothreonine; by autocatalysis. The KA1 domain occupies 594–643 (SDFGKVTMQFELEVCQLQRPDVVGIRRQRLKGDAWVYKRLVEDILSGCKM).

This sequence belongs to the protein kinase superfamily. CAMK Ser/Thr protein kinase family. SNF1 subfamily. As to quaternary structure, monomer. Interacts with ZNF622 and PPP1R8. Autophosphorylated: autophosphorylation of the T-loop at Thr-167 and Ser-171 is required for activation. As to expression, expressed in testis, ovary, thymus, spleen and T-cell. Expressed by neural progenitors: highly enriched in cultures containing multipotent progenitors.

It is found in the cell membrane. The enzyme catalyses L-tyrosyl-[protein] + ATP = O-phospho-L-tyrosyl-[protein] + ADP + H(+). The catalysed reaction is L-seryl-[protein] + ATP = O-phospho-L-seryl-[protein] + ADP + H(+). It carries out the reaction L-threonyl-[protein] + ATP = O-phospho-L-threonyl-[protein] + ADP + H(+). Its activity is regulated as follows. Activated by autophosphorylation of the T-loop at Thr-167 and Ser-171: in contrast to other members of the SNF1 subfamily, phosphorylation at Thr-167 is not mediated by STK11/LKB1 but via autophosphorylation instead. Inhibited by calcium-binding. Kinase activity is also regulated by reducing agents: dithiothreitol (DTT) or reduced glutathione are required for kinase activity in vitro; such dependence is however not due to the presence of disulfide bonds. Serine/threonine-protein kinase involved in various processes such as cell cycle regulation, self-renewal of stem cells, apoptosis and splicing regulation. Has a broad substrate specificity; phosphorylates BCL2L14, CDC25B, MAP3K5/ASK1 and ZNF622. Acts as an activator of apoptosis by phosphorylating and activating MAP3K5/ASK1. Acts as a regulator of cell cycle, notably by mediating phosphorylation of CDC25B, promoting localization of CDC25B to the centrosome and the spindle poles during mitosis. Plays a key role in cell proliferation. Required for proliferation of embryonic and postnatal multipotent neural progenitors. Phosphorylates and inhibits BCL2L14. Also involved in the inhibition of spliceosome assembly during mitosis by phosphorylating ZNF622, thereby contributing to its redirection to the nucleus. May also play a role in primitive hematopoiesis. The chain is Maternal embryonic leucine zipper kinase (Melk) from Mus musculus (Mouse).